Consider the following 609-residue polypeptide: MDPNEKGIEVLSFIDEQAECSGSDSEEGYEESQSDLSDLIDNTECEQGNSAELFAQQEALAVQEHIRASKRKLKLSFRNPLQCITSHSNRTPSRAAPKRRKLDDSGYNEDILGEVAQVDENGGSEGYGSLGSQNVSGRVQVCNVNAANKENDLCGSFLRAGSRRATQLAIFKDKFNISFNSLTRPFKNDKTCCNNWVGAMFGARDELLEASKMLLQRHCDYLMLLMHTCKLGFMALYLLEFKHAKSRETIRHLFQQILQIEKEEMFLEPPKLKSLPAATFWWKISHSASAYIYGELPDWIARQTSLSHQRQDDQPFDLSQMVQWAYDHNYTDEPTIAYNYARMASEDSNAAAFLRCNSQVKFVKECAQMTKYYKTAEMREMSMGKWIKRALDEISGTGDWKDIINFLKYQGINFLSFLASFKDLLHGIPKRNCLVIVGPPNTGKSMFVMSLMKALKGRVLSFVNSKSHFWLQPLNAAKIAVLDDATKATWSYIDTYLRNGLDGTPVSLDMKHRAPIQICFPPLLITTNVQVMKDPLYMYLHSRLMCFEFPNPFPLNEAGQPALILNELSWKSFFARLWRQLDLSDAEDAEDGEPPSPFRCCARSADRHL.

A Nuclear localization signal motif is present at residues 70–72 (KRK). At S76 the chain carries Phosphoserine; by host. Residues 84–103 (ITSHSNRTPSRAAPKRRKLD) are disordered. The interval 146–313 (AANKENDLCG…TSLSHQRQDD (168 aa)) is DNA-binding region. Residues 398–562 (GDWKDIINFL…FPLNEAGQPA (165 aa)) enclose the SF3 helicase domain. 438–445 (GPPNTGKS) serves as a coordination point for ATP.

This sequence belongs to the papillomaviridae E1 protein family. In terms of assembly, can form hexamers. Interacts with E2 protein; this interaction increases E1 DNA binding specificity. Interacts with host DNA polymerase subunit POLA2. Interacts with host single stranded DNA-binding protein RPA1. Interacts with host TOP1; this interaction stimulates the enzymatic activity of TOP1. Phosphorylated.

Its subcellular location is the host nucleus. It carries out the reaction Couples ATP hydrolysis with the unwinding of duplex DNA by translocating in the 3'-5' direction.. The catalysed reaction is ATP + H2O = ADP + phosphate + H(+). Functionally, ATP-dependent DNA 3'-5' helicase required for initiation of viral DNA replication. It forms a complex with the viral E2 protein. The E1-E2 complex binds to the replication origin which contains binding sites for both proteins. During the initial step, a dimer of E1 interacts with a dimer of protein E2 leading to a complex that binds the viral origin of replication with high specificity. Then, a second dimer of E1 displaces the E2 dimer in an ATP-dependent manner to form the E1 tetramer. Following this, two E1 monomers are added to each half of the site, which results in the formation of two E1 trimers on the viral ori. Subsequently, two hexamers will be created. The double hexamer acts as a bi-directional helicase machinery and unwinds the viral DNA and then recruits the host DNA polymerase to start replication. The polypeptide is Replication protein E1 (Bos taurus (Bovine)).